Reading from the N-terminus, the 154-residue chain is 6,7-dimethyl-8-ribityllumazine synthase (154 aa).

Residues Phe22, 56 to 58 (AFE), and 80 to 82 (TVI) each bind 5-amino-6-(D-ribitylamino)uracil. Residue 85 to 86 (AT) participates in (2S)-2-hydroxy-3-oxobutyl phosphate binding. His88 acts as the Proton donor in catalysis. Position 113 (Phe113) interacts with 5-amino-6-(D-ribitylamino)uracil. Position 127 (Arg127) interacts with (2S)-2-hydroxy-3-oxobutyl phosphate.

It belongs to the DMRL synthase family. Forms an icosahedral capsid composed of 60 subunits, arranged as a dodecamer of pentamers.

It carries out the reaction (2S)-2-hydroxy-3-oxobutyl phosphate + 5-amino-6-(D-ribitylamino)uracil = 6,7-dimethyl-8-(1-D-ribityl)lumazine + phosphate + 2 H2O + H(+). Its pathway is cofactor biosynthesis; riboflavin biosynthesis; riboflavin from 2-hydroxy-3-oxobutyl phosphate and 5-amino-6-(D-ribitylamino)uracil: step 1/2. Functionally, catalyzes the formation of 6,7-dimethyl-8-ribityllumazine by condensation of 5-amino-6-(D-ribitylamino)uracil with 3,4-dihydroxy-2-butanone 4-phosphate. This is the penultimate step in the biosynthesis of riboflavin. The sequence is that of 6,7-dimethyl-8-ribityllumazine synthase from Bacillus pumilus (strain SAFR-032).